A 792-amino-acid polypeptide reads, in one-letter code: Phosphoenolpyruvate synthase (792 aa).

Catalysis depends on His421, which acts as the Tele-phosphohistidine intermediate. 7 residues coordinate substrate: Arg511, Arg578, Glu680, Gly701, Ser702, Asn703, and Asp704. Glu680 provides a ligand contact to Mg(2+). Asp704 is a Mg(2+) binding site. Cys751 functions as the Proton donor in the catalytic mechanism.

Belongs to the PEP-utilizing enzyme family. In terms of assembly, homodimer. The cofactor is Mg(2+).

It carries out the reaction pyruvate + ATP + H2O = phosphoenolpyruvate + AMP + phosphate + 2 H(+). It functions in the pathway carbohydrate biosynthesis; gluconeogenesis. With respect to regulation, activated by a Pi-dependent pyrophosphorylation and inactivated by an ADP-dependent phosphorylation on a regulatory threonine. Both reactions are mediated by the bifunctional serine/threonine kinase and phosphorylase PpsR. In terms of biological role, catalyzes the phosphorylation of pyruvate to phosphoenolpyruvate. The protein is Phosphoenolpyruvate synthase (ppsA) of Escherichia coli (strain K12).